The primary structure comprises 504 residues: Maturase K (504 aa).

The protein belongs to the intron maturase 2 family. MatK subfamily.

The protein localises to the plastid. The protein resides in the chloroplast. Its function is as follows. Usually encoded in the trnK tRNA gene intron. Probably assists in splicing its own and other chloroplast group II introns. In Wollastonia biflora (Beach sunflower), this protein is Maturase K.